Consider the following 380-residue polypeptide: Beta-1,3-N-acetylglucosaminyltransferase lunatic fringe (380 aa).

Over 1–8 (MLKRCGRR) the chain is Cytoplasmic. Residues 9 to 29 (LLLALAGALLACLLVLTADPP) traverse the membrane as a helical; Signal-anchor for type II membrane protein segment. Residues 30-380 (PPPVPAERGR…TSWCPRSAIF (351 aa)) are Lumenal-facing. The segment at 85–110 (SRRDVGPPPGGAPRPADGPPRPLAEP) is disordered. Residues 90 to 107 (GPPPGGAPRPADGPPRPL) are compositionally biased toward pro residues. Residue arginine 130 participates in substrate binding. N-linked (GlcNAc...) asparagine glycosylation occurs at asparagine 168. 2 disulfide bridges follow: cysteine 169–cysteine 180 and cysteine 198–cysteine 261. Residue aspartate 202 participates in substrate binding. Aspartate 203 contacts Mn(2+). The active site involves aspartate 291. Position 315 (histidine 315) interacts with Mn(2+). The cysteines at positions 365 and 374 are disulfide-linked.

Belongs to the glycosyltransferase 31 family. Mn(2+) serves as cofactor. Co(2+) is required as a cofactor. Post-translationally, a soluble form may be derived from the membrane form by proteolytic processing.

It is found in the golgi apparatus. The protein resides in the golgi apparatus membrane. The catalysed reaction is 3-O-(alpha-L-fucosyl)-L-threonyl-[EGF-like domain protein] + UDP-N-acetyl-alpha-D-glucosamine = 3-O-(N-acetyl-beta-D-glucosaminyl-(1-&gt;3)-alpha-L-fucosyl)-L-threonyl-[EGF-like domain protein] + UDP + H(+). The enzyme catalyses 3-O-(alpha-L-fucosyl)-L-seryl-[EGF-like domain protein] + UDP-N-acetyl-alpha-D-glucosamine = 3-O-(N-acetyl-beta-D-glucosaminyl-(1-&gt;3)-alpha-L-fucosyl)-L-seryl-[EGF-like domain protein] + UDP + H(+). Functionally, glycosyltransferase that initiates the elongation of O-linked fucose residues attached to EGF-like repeats in the extracellular domain of Notch molecules. Modulates NOTCH1 activity by modifying O-fucose residues at specific EGF-like domains resulting in inhibition of NOTCH1 activation by JAG1 and enhancement of NOTCH1 activation by DLL1 via an increase in its binding to DLL1. Decreases the binding of JAG1 to NOTCH2 but not that of DLL1. Essential mediator of somite segmentation and patterning. This Bos taurus (Bovine) protein is Beta-1,3-N-acetylglucosaminyltransferase lunatic fringe (LFNG).